A 484-amino-acid chain; its full sequence is Glutamate--tRNA ligase (484 aa).

Positions 11-21 match the 'HIGH' region motif; it reads PSPTGLLHIGN. The 'KMSKS' region motif lies at 255 to 259; that stretch reads KLSKR. ATP is bound at residue lysine 258.

Belongs to the class-I aminoacyl-tRNA synthetase family. Glutamate--tRNA ligase type 1 subfamily. As to quaternary structure, monomer.

Its subcellular location is the cytoplasm. The enzyme catalyses tRNA(Glu) + L-glutamate + ATP = L-glutamyl-tRNA(Glu) + AMP + diphosphate. Catalyzes the attachment of glutamate to tRNA(Glu) in a two-step reaction: glutamate is first activated by ATP to form Glu-AMP and then transferred to the acceptor end of tRNA(Glu). In Streptococcus agalactiae serotype V (strain ATCC BAA-611 / 2603 V/R), this protein is Glutamate--tRNA ligase.